A 71-amino-acid polypeptide reads, in one-letter code: MAKQSAIEQDGAIIEALSNAMFRVELENGHIVIAHISGKMRMHYIKLLPGDKVKLEMSPYDLSKARITYRY.

The 71-residue stretch at 1-71 (MAKQSAIEQD…LSKARITYRY (71 aa)) folds into the S1-like domain.

It belongs to the IF-1 family. In terms of assembly, component of the 30S ribosomal translation pre-initiation complex which assembles on the 30S ribosome in the order IF-2 and IF-3, IF-1 and N-formylmethionyl-tRNA(fMet); mRNA recruitment can occur at any time during PIC assembly.

The protein resides in the cytoplasm. Its function is as follows. One of the essential components for the initiation of protein synthesis. Stabilizes the binding of IF-2 and IF-3 on the 30S subunit to which N-formylmethionyl-tRNA(fMet) subsequently binds. Helps modulate mRNA selection, yielding the 30S pre-initiation complex (PIC). Upon addition of the 50S ribosomal subunit IF-1, IF-2 and IF-3 are released leaving the mature 70S translation initiation complex. The sequence is that of Translation initiation factor IF-1 from Flavobacterium psychrophilum (strain ATCC 49511 / DSM 21280 / CIP 103535 / JIP02/86).